A 165-amino-acid polypeptide reads, in one-letter code: Large ribosomal subunit protein uL15 (165 aa).

Over residues Met1–Gly30 the composition is skewed to basic residues. 2 disordered regions span residues Met1 to His39 and Ala137 to Ala165. Residues Ala150–Ala165 are compositionally biased toward acidic residues.

Belongs to the universal ribosomal protein uL15 family. Part of the 50S ribosomal subunit.

In terms of biological role, binds to the 23S rRNA. This Halorubrum lacusprofundi (strain ATCC 49239 / DSM 5036 / JCM 8891 / ACAM 34) protein is Large ribosomal subunit protein uL15.